The chain runs to 84 residues: U8-theraphotoxin-Hhn1c 1 (84 aa).

An N-terminal signal peptide occupies residues 1–21 (MKVVLIVCLVWVMAMMELVSC). 5 disulfide bridges follow: C23/C35, C29/C44, C34/C67, C54/C75, and C69/C81.

This sequence belongs to the AVIT (prokineticin) family. In terms of tissue distribution, expressed by the venom gland.

The protein resides in the secreted. This chain is U8-theraphotoxin-Hhn1c 1, found in Cyriopagopus hainanus (Chinese bird spider).